A 509-amino-acid polypeptide reads, in one-letter code: Cytochrome P450 monooxygenase ARMGADRAFT_974139 (509 aa).

Residues 4 to 24 (ASLAVVVWAILLVLWLRRIFG) form a helical membrane-spanning segment. 2 N-linked (GlcNAc...) asparagine glycosylation sites follow: asparagine 96 and asparagine 279. Cysteine 439 contributes to the heme binding site.

This sequence belongs to the cytochrome P450 family. Heme is required as a cofactor.

Its subcellular location is the membrane. Its pathway is secondary metabolite biosynthesis. In terms of biological role, cytochrome P450 monooxygenase, part of the gene cluster that mediates the biosynthesis of melleolides, a range of antifungal and phytotoxic polyketide derivatives composed of an orsellinic acid (OA) moiety esterified to various sesquiterpene alcohols. The first step in melleolides biosynthesis is performed by the delta(6)-protoilludene synthase PRO1 which catalyzes the cyclization of farnesyl diphosphate to protoilludene. The orsellinic acid synthase armB produces OA by condensing acetyl-CoA with 3 malonyl-CoA units in a three-round chain elongation reaction folowed by a C2-C7 ring closure. ArmB further catalyzes the trans-esterification of OA to the various sesquiterpene alcohols resulting from the hydroxylation of protoilludene. The melleolides cluster also includes 5 cytochrome P450 monooxygenases, 4 NAD(+)-dependent oxidoreductases, one flavin-dependent oxidoreductase, and one O-methyltransferase. The cytochrome P450 monooxygenases may be involved in protoilludene hydroxylation to elaborate melleolides with multiple alcohol groups, such as melleolide D, which carries alcohol functionalities at C-4, C-5, C-10, and C-13. The role of the NAD(+)-dependent enzymes remains unknown. Numerous melleolides, including arnamial, show 5'-O-methylation of the aromatic moiety which may be catalyzed by the methyltransferase encoded in the cluster. The flavin-dependent oxidoreductase might represent the dehydrogenase yielding the aldehyde in position 1 of arnamial and other melleolides. Finally, several halogenase localized outside of the cluster, are able to catalyze the transfer of a single chlorine atom to the melleolide backbone, resulting in a 6'-chloromelleolide product. This chain is Cytochrome P450 monooxygenase ARMGADRAFT_974139, found in Armillaria gallica (Bulbous honey fungus).